Consider the following 333-residue polypeptide: tRNA-modifying protein YgfZ (333 aa).

Residues tryptophan 33 and tryptophan 195 each contribute to the folate site.

This sequence belongs to the tRNA-modifying YgfZ family.

It localises to the cytoplasm. Folate-binding protein involved in regulating the level of ATP-DnaA and in the modification of some tRNAs. It is probably a key factor in regulatory networks that act via tRNA modification, such as initiation of chromosomal replication. The protein is tRNA-modifying protein YgfZ of Pectobacterium atrosepticum (strain SCRI 1043 / ATCC BAA-672) (Erwinia carotovora subsp. atroseptica).